A 357-amino-acid chain; its full sequence is Glutamine synthetase root isozyme 5 (357 aa).

One can recognise a GS beta-grasp domain in the interval 19–99 (IIAEYIWVGG…VMCDCYTPQG (81 aa)). Residues 106-357 (KRYKAATVFS…ADTTILWKGN (252 aa)) form the GS catalytic domain.

It belongs to the glutamine synthetase family. In terms of assembly, homooctamer. Found mainly in the cortical tissues of seedling roots, stem and seedling shoot.

The protein localises to the cytoplasm. The enzyme catalyses L-glutamate + NH4(+) + ATP = L-glutamine + ADP + phosphate + H(+). Plays a role in the flow of nitrogen into nitrogenous organic compounds. The sequence is that of Glutamine synthetase root isozyme 5 (GS1-5) from Zea mays (Maize).